We begin with the raw amino-acid sequence, 154 residues long: Toxin YhaV (154 aa).

As to quaternary structure, homohexamer; forms a complex with PrlF (SohA) with stoichiometry PrlF(2)-YhaV(4), possibly as a YhaV(2)-PrlF(2)-YhaV(2) complex like the MazFE complex. May dimerize in solution.

Functionally, toxic component of a type II toxin-antitoxin (TA) system. Has RNase activity in vitro. Acts as a transcription factor. The YhaV/PrlF complex binds the prlF-yhaV operon, probably negatively regulating its expression. This is Toxin YhaV (yhaV) from Escherichia coli O157:H7.